Here is a 206-residue protein sequence, read N- to C-terminus: Small ribosomal subunit protein uS4 (206 aa).

The 61-residue stretch at 96 to 156 folds into the S4 RNA-binding domain; it reads GRLDNVVYRM…EKAKKQARIK (61 aa).

Belongs to the universal ribosomal protein uS4 family. As to quaternary structure, part of the 30S ribosomal subunit. Contacts protein S5. The interaction surface between S4 and S5 is involved in control of translational fidelity.

In terms of biological role, one of the primary rRNA binding proteins, it binds directly to 16S rRNA where it nucleates assembly of the body of the 30S subunit. Its function is as follows. With S5 and S12 plays an important role in translational accuracy. This Aeromonas hydrophila subsp. hydrophila (strain ATCC 7966 / DSM 30187 / BCRC 13018 / CCUG 14551 / JCM 1027 / KCTC 2358 / NCIMB 9240 / NCTC 8049) protein is Small ribosomal subunit protein uS4.